The primary structure comprises 351 residues: Divinyl chlorophyll a/b light-harvesting protein PcbC (351 aa).

Helical transmembrane passes span Phe27 to Leu47, Gly81 to Val101, Phe140 to Ala160, Val202 to Ala222, Ala242 to Cys262, and Leu309 to Leu329.

The protein belongs to the PsbB/PsbC family. IsiA/Pcb subfamily. As to quaternary structure, the antenna complex consists of divinyl chlorophylls (a and b) and divinyl chlorophyll a/b binding proteins and binds more divinyl chlorophyll b than does the antenna complex from high-light-adapted Prochlorococcus. It depends on divinyl chlorophyll a as a cofactor. Divinyl chlorophyll b serves as cofactor.

The protein resides in the cellular thylakoid membrane. The antenna complex functions as a light receptor, it captures and delivers excitation energy to photosystems II and I. The Prochlorales pcb genes are not related to higher plant LHCs. The chain is Divinyl chlorophyll a/b light-harvesting protein PcbC (pcbC) from Prochlorococcus marinus (strain NATL2A).